Here is a 435-residue protein sequence, read N- to C-terminus: Transmembrane protease serine 4 (435 aa).

Topologically, residues 1–30 (MESDSGQPLNNRDIVPFRKPRRPQETFKKV) are cytoplasmic. Residues 31–51 (GIPIIAVLLSLIALVIVALLI) traverse the membrane as a helical; Signal-anchor for type II membrane protein segment. The Extracellular portion of the chain corresponds to 52-435 (KVILDKYYFI…WIYNVRKSEM (384 aa)). The 43-residue stretch at 59–101 (YFICGSPLTFIQRGQLCDGHLDCASGEDEEHCVKDFPEKPGVA) folds into the LDL-receptor class A domain. 8 cysteine pairs are disulfide-bonded: Cys62–Cys81, Cys75–Cys90, Cys125–Cys181, Cys138–Cys191, Cys194–Cys308, Cys228–Cys244, Cys354–Cys370, and Cys381–Cys408. An SRCR domain is found at 102–202 (VRLSKDRSTL…DCGKSLKTPR (101 aa)). N-linked (GlcNAc...) asparagine glycosylation is found at Asn128 and Asn176. Residues 203-432 (VVGGVEAPVD…YLNWIYNVRK (230 aa)) enclose the Peptidase S1 domain. Catalysis depends on charge relay system residues His243 and Asp288. Ser385 serves as the catalytic Charge relay system.

It belongs to the peptidase S1 family. Proteolytically processed; probably by an autocatalytic mechanism.

Its subcellular location is the cell membrane. It localises to the secreted. In terms of biological role, plasma membrane-anchored serine protease that directly induces processing of pro-uPA/PLAU into the active form through proteolytic activity. Seems to be capable of activating ENaC. In Mus musculus (Mouse), this protein is Transmembrane protease serine 4.